We begin with the raw amino-acid sequence, 531 residues long: Probable rhamnogalacturonate lyase A (531 aa).

Positions M1 to A20 are cleaved as a signal peptide. 2 disulfides stabilise this stretch: C50/C93 and C184/C193. A glycan (N-linked (GlcNAc...) asparagine) is linked at N351.

It belongs to the polysaccharide lyase 4 family.

Its subcellular location is the secreted. It catalyses the reaction Endotype eliminative cleavage of L-alpha-rhamnopyranosyl-(1-&gt;4)-alpha-D-galactopyranosyluronic acid bonds of rhamnogalacturonan I domains in ramified hairy regions of pectin leaving L-rhamnopyranose at the reducing end and 4-deoxy-4,5-unsaturated D-galactopyranosyluronic acid at the non-reducing end.. Pectinolytic enzymes consist of four classes of enzymes: pectin lyase, polygalacturonase, pectin methylesterase and rhamnogalacturonase. Degrades the rhamnogalacturonan I (RG-I) backbone of pectin. In Aspergillus terreus (strain NIH 2624 / FGSC A1156), this protein is Probable rhamnogalacturonate lyase A (rglA).